The primary structure comprises 255 residues: Ornithine decarboxylase antizyme (255 aa).

Belongs to the ODC antizyme family. Interacts with ODC and thereby sterically blocks ODC homodimerization.

Ornithine decarboxylase (ODC) antizyme protein that negatively regulates ODC activity and intracellular polyamine biosynthesis in response to increased intracellular polyamine levels. Binds to ODC monomers, inhibiting the assembly of the functional ODC homodimer, and targets the monomers for ubiquitin-independent proteolytic destruction by the 26S proteasome. In Eremothecium gossypii (strain ATCC 10895 / CBS 109.51 / FGSC 9923 / NRRL Y-1056) (Yeast), this protein is Ornithine decarboxylase antizyme (OAZ1).